Consider the following 343-residue polypeptide: Phenylalanine--tRNA ligase alpha subunit (343 aa).

Mg(2+) is bound at residue E256.

Belongs to the class-II aminoacyl-tRNA synthetase family. Phe-tRNA synthetase alpha subunit type 1 subfamily. Tetramer of two alpha and two beta subunits. Mg(2+) is required as a cofactor.

It localises to the cytoplasm. The catalysed reaction is tRNA(Phe) + L-phenylalanine + ATP = L-phenylalanyl-tRNA(Phe) + AMP + diphosphate + H(+). The sequence is that of Phenylalanine--tRNA ligase alpha subunit from Prosthecochloris aestuarii (strain DSM 271 / SK 413).